A 276-amino-acid polypeptide reads, in one-letter code: Exosome complex component RRP43 (276 aa).

Ala-2 bears the N-acetylalanine mark.

It belongs to the RNase PH family. In terms of assembly, component of the RNA exosome core complex (Exo-9), composed of EXOSC1, EXOSC2, EXOSC3, EXOSC4, EXOSC5, EXOSC6, EXOSC7, EXOSC8 and EXOSC9; within the complex interacts with EXOSC5 and EXOSC6. The catalytically inactive RNA exosome core complex (Exo-9) associates with the catalytic subunit EXOSC10/RRP6. Exo-9 may associate with DIS3 to form the nucleolar exosome complex, or DIS3L to form the cytoplasmic exosome complex. Exo-9 is formed by a hexameric base ring consisting of the heterodimers EXOSC4-EXOSC9, EXOSC5-EXOSC8 and EXOSC6-EXOSC7, and a cap ring consisting of EXOSC1, EXOSC2 and EXOSC3. The RNA exosome complex associates with cofactors C1D/RRP47, MPHOSPH6/MPP6 and MTREX/MTR4.

It is found in the cytoplasm. The protein resides in the nucleus. Its subcellular location is the nucleolus. Functionally, non-catalytic component of the RNA exosome complex which has 3'-&gt;5' exoribonuclease activity and participates in a multitude of cellular RNA processing and degradation events. In the nucleus, the RNA exosome complex is involved in proper maturation of stable RNA species such as rRNA, snRNA and snoRNA, in the elimination of RNA processing by-products and non-coding 'pervasive' transcripts, such as antisense RNA species and promoter-upstream transcripts (PROMPTs), and of mRNAs with processing defects, thereby limiting or excluding their export to the cytoplasm. The RNA exosome may be involved in Ig class switch recombination (CSR) and/or Ig variable region somatic hypermutation (SHM) by targeting AICDA deamination activity to transcribed dsDNA substrates. In the cytoplasm, the RNA exosome complex is involved in general mRNA turnover and specifically degrades inherently unstable mRNAs containing AU-rich elements (AREs) within their 3' untranslated regions, and in RNA surveillance pathways, preventing translation of aberrant mRNAs. It seems to be involved in degradation of histone mRNA. The catalytic inactive RNA exosome core complex of 9 subunits (Exo-9) is proposed to play a pivotal role in the binding and presentation of RNA for ribonucleolysis, and to serve as a scaffold for the association with catalytic subunits and accessory proteins or complexes. EXOSC8 binds to ARE-containing RNAs. This Mus musculus (Mouse) protein is Exosome complex component RRP43 (Exosc8).